A 230-amino-acid polypeptide reads, in one-letter code: Stachydrine N-demethylase reductase subunit Stc3 (230 aa).

The protein belongs to the non-flavoprotein flavin reductase family. In terms of assembly, the system is probably composed of an oxygenase subunit (Stc2) and two reductase subunits (Stc3 and Stc4).

Reductase involved in the catabolism of stachydrine (L-proline betaine), a source of carbon and nitrogen. Part of a Rieske-type oxygenase system that catalyzes the demethylation of stachydrine to produce N-methyl-L-proline (monomethylproline). This subunit is probably involved in the transfer of electrons from NAD(P)H to the catalytic subunit Stc2. The protein is Stachydrine N-demethylase reductase subunit Stc3 of Rhizobium meliloti (strain 1021) (Ensifer meliloti).